A 692-amino-acid chain; its full sequence is Transcription factor steA (692 aa).

A DNA-binding region spans residues 56 to 165 (DQLIRRFLLP…SVPHDRLFLD (110 aa)). Disordered stretches follow at residues 406 to 507 (SPTY…EQSS) and 519 to 540 (LPANGTVESGAPNGVGHKSDRY). Residues 470–482 (RSVNSTYTATLPQ) show a composition bias toward polar residues. C2H2-type zinc fingers lie at residues 564 to 588 (HSCPIPSCGRLFKRLEHLKRHVRTH) and 594 to 616 (YPCPYCNKAFSRSDNLAQHRRIH). A disordered region spans residues 618–665 (AQQDGQPLVHEDDLENDDNESVSHDEDESPSESVHPAVPGVHGMTSMP). A compositionally biased stretch (acidic residues) spans 629–647 (DDLENDDNESVSHDEDESP).

The protein belongs to the STE12 transcription factor family.

It is found in the nucleus. Transcription factor involved in sexual reproduction. Required for cleistothecial development and ascosporogenesis. Not required for asexual reproduction (conidiation). May act to repress medA expression. The chain is Transcription factor steA (steA) from Emericella nidulans (strain FGSC A4 / ATCC 38163 / CBS 112.46 / NRRL 194 / M139) (Aspergillus nidulans).